A 465-amino-acid chain; its full sequence is 2-methylcitrate synthase, mitochondrial (465 aa).

The transit peptide at 1-29 (MAMTMRSTRHASKLAQTARLALTNSRRYS) directs the protein to the mitochondrion. Positions 74 and 192 each coordinate CoA. Oxaloacetate is bound at residue His-269. Leu-304 lines the CoA pocket. His-305 is a catalytic residue. CoA contacts are provided by Val-346, Gly-348, and Tyr-349. His-351 and Arg-360 together coordinate oxaloacetate. Residue His-351 is part of the active site. The CoA site is built by Thr-400, Lys-401, and Asn-406. Residue Asp-408 is part of the active site. Positions 434 and 454 each coordinate oxaloacetate.

The protein belongs to the citrate synthase family. As to quaternary structure, homodimer.

Its subcellular location is the mitochondrion matrix. It catalyses the reaction propanoyl-CoA + oxaloacetate + H2O = (2S,3S)-2-methylcitrate + CoA + H(+). The enzyme catalyses oxaloacetate + acetyl-CoA + H2O = citrate + CoA + H(+). Its pathway is organic acid metabolism; propanoate degradation. Component of the methylcitrate cycle that catalyzes the synthesis of (2S,3S)-2-methylcitrate from propionyl-CoA and oxaloacetate. Plays an important role in detoxification of propionyl-CoA, an inhibitor of both primary and secondary metabolism. Also has citrate synthase activity using as substrates acetyl-CoA and oxaloacetate. Plays a key role in the estabishment of invasive pulmonary aspergillosis. The polypeptide is 2-methylcitrate synthase, mitochondrial (Aspergillus fumigatus (strain CBS 144.89 / FGSC A1163 / CEA10) (Neosartorya fumigata)).